Reading from the N-terminus, the 94-residue chain is Late cornified envelope protein 3C (94 aa).

The span at 1–10 (MSCQQNQQQC) shows a compositional bias: low complexity. Disordered regions lie at residues 1 to 35 (MSCQ…PPSS) and 65 to 94 (CRRQ…GGCC). Pro residues predominate over residues 11 to 34 (QPPPSCPSPKCPPKSPAQCLPPPS). A compositionally biased stretch (gly residues) spans 78-94 (GQQGGGSCRGHGSGGCC).

The protein belongs to the LCE family. Interacts with CYSRT1; the interaction is direct. Skin-specific. Expression was readily detected in adult trunk skin, adult arm skin, fetal skin, penal skin, vulva, esophagus and tongue. Not expressed in the cervix, rectum, lung, colon, or placenta.

Functionally, a structural component of the cornified envelope of the stratum corneum involved in innate cutaneous host defense. Possesses defensin-like antimicrobial activity against a broad spectrum of Gram-positive and Gram-negative bacteria, both aerobic and anaerobic species. Upon inflammation, may regulate skin barrier repair by shaping cutaneous microbiota composition and immune response to bacterial antigens. This Homo sapiens (Human) protein is Late cornified envelope protein 3C.